The following is a 158-amino-acid chain: MGVFTFQDEYTSTIAPAKLYKALVTDADIIIPKAVETIQSVEIVEGNGGPGTIKKLTFIEGGESKYVLHKIEAIDEANLGYNYSIVGGVGLPDTIEKISFETKLVEGANGGSIGKVTIKIETKGDAQPNEEEGKAAKARGDAFFKAIESYLSAHPDYN.

D8 contacts trans-zeatin. Residues P32, V35, and I38 each contribute to the Ca(2+) site. The trans-zeatin site is built by E60, H69, Y81, and Y83. Position 83 (Y83) interacts with melatonin.

Belongs to the BetVI family.

It localises to the cytoplasm. The protein localises to the cytosol. Class II ribonuclease (RNase). Binds to several cytokinins including natural adenine-type (e.g. trans-zeatin and kinetin) and artificial urea-type (e.g. N,N'-diphenylurea and N-phenyl-N'-(2-chloro-4-pyridyl)urea) hormones. Interacts with melatonin. The chain is Class 10 plant pathogenesis-related protein 2B from Lupinus luteus (European yellow lupine).